The sequence spans 468 residues: Cysteine--tRNA ligase (468 aa).

Cys33 is a Zn(2+) binding site. The 'HIGH' region motif lies at 35–45 (ATVQGLPHIGH). Cys211, His236, and Glu240 together coordinate Zn(2+). The 'KMSKS' region signature appears at 267-271 (KMSKS). Lys270 contributes to the ATP binding site.

The protein belongs to the class-I aminoacyl-tRNA synthetase family. As to quaternary structure, monomer. Zn(2+) serves as cofactor.

Its subcellular location is the cytoplasm. The catalysed reaction is tRNA(Cys) + L-cysteine + ATP = L-cysteinyl-tRNA(Cys) + AMP + diphosphate. The sequence is that of Cysteine--tRNA ligase from Mycobacterium avium (strain 104).